Reading from the N-terminus, the 239-residue chain is Tetraspanin-9 (239 aa).

Over 1-13 the chain is Cytoplasmic; that stretch reads MARGCLCCLKYTM. A helical membrane pass occupies residues 14-34; the sequence is FLFNLIFWLCGCGLLGVGIWL. Topologically, residues 35–55 are extracellular; it reads SVSQGNFATFSPSFPSLSAAN. A helical membrane pass occupies residues 56-76; it reads LVIAIGTIVMVTGFLGCLGAI. The Cytoplasmic segment spans residues 77 to 85; sequence KENKCLLLS. Residues 86–106 form a helical membrane-spanning segment; the sequence is FFIVLLIILLAELILIILFFV. The Extracellular segment spans residues 107 to 203; it reads YMDKVNENAK…VKLWFDDNKH (97 aa). Asn-180 carries N-linked (GlcNAc...) asparagine glycosylation. Residues 204-224 traverse the membrane as a helical segment; it reads VLGTVGMCILIMQILGMAFSM. Over 225–239 the chain is Cytoplasmic; that stretch reads TLFQHIHRTGKKYDA.

It belongs to the tetraspanin (TM4SF) family. Found in a complex with GP6. Glycosylated. In terms of tissue distribution, strongly expressed in megakaryocytes, platelets and lung. Weakly expressed in bone marrow, brain and kidney (at protein level).

Its subcellular location is the membrane. In Mus musculus (Mouse), this protein is Tetraspanin-9 (Tspan9).